Consider the following 883-residue polypeptide: Probable ribonuclease ZC3H12C (883 aa).

Disordered regions lie at residues 53–109 and 139–158; these read QLSP…ISVE and DFKPEESQTTSKEAKKPPDV. Residue serine 230 is modified to Phosphoserine. In terms of domain architecture, RNase NYN spans 245 to 400; the sequence is LRPIVIDGSN…LGRHGPSLDN (156 aa). The C3H1-type zinc-finger motif lies at 410–435; sequence EHKKQPCPYGKKCTYGHKCKYYHPER. 3 disordered regions span residues 456 to 551, 680 to 738, and 754 to 775; these read AKTA…FPPQ, FHDP…KAPH, and SRLYDSSPSRQRKPYSRQEGLG. A compositionally biased stretch (polar residues) spans 466 to 477; the sequence is KSNSVPCSTKAD. The segment covering 503 to 515 has biased composition (basic and acidic residues); that stretch reads LEEKLPTKNKLET. The span at 517–542 shows a compositional bias: polar residues; that stretch reads SVPSLVSIPATSTAKPQSTTSLSNGL. Positions 705-714 are enriched in low complexity; the sequence is HLALHLPHSA.

This sequence belongs to the ZC3H12 family. The cofactor is Mg(2+).

Its function is as follows. May function as RNase and regulate the levels of target RNA species. In Homo sapiens (Human), this protein is Probable ribonuclease ZC3H12C (ZC3H12C).